The chain runs to 730 residues: Ribosomal RNA large subunit methyltransferase K/L (730 aa).

The 112-residue stretch at 46 to 157 (TAYRLCLWSR…RGEAILSLDL (112 aa)) folds into the THUMP domain.

It belongs to the methyltransferase superfamily. RlmKL family.

It is found in the cytoplasm. It catalyses the reaction guanosine(2445) in 23S rRNA + S-adenosyl-L-methionine = N(2)-methylguanosine(2445) in 23S rRNA + S-adenosyl-L-homocysteine + H(+). It carries out the reaction guanosine(2069) in 23S rRNA + S-adenosyl-L-methionine = N(2)-methylguanosine(2069) in 23S rRNA + S-adenosyl-L-homocysteine + H(+). In terms of biological role, specifically methylates the guanine in position 2445 (m2G2445) and the guanine in position 2069 (m7G2069) of 23S rRNA. The sequence is that of Ribosomal RNA large subunit methyltransferase K/L from Pseudomonas putida (strain W619).